The sequence spans 267 residues: Indole-3-glycerol phosphate synthase (267 aa).

The protein belongs to the TrpC family.

The enzyme catalyses 1-(2-carboxyphenylamino)-1-deoxy-D-ribulose 5-phosphate + H(+) = (1S,2R)-1-C-(indol-3-yl)glycerol 3-phosphate + CO2 + H2O. Its pathway is amino-acid biosynthesis; L-tryptophan biosynthesis; L-tryptophan from chorismate: step 4/5. This chain is Indole-3-glycerol phosphate synthase, found in Cupriavidus necator (strain ATCC 17699 / DSM 428 / KCTC 22496 / NCIMB 10442 / H16 / Stanier 337) (Ralstonia eutropha).